The primary structure comprises 309 residues: Homoserine kinase (309 aa).

ATP is bound at residue 91-101; it reads PIGSGLGSSAC.

It belongs to the GHMP kinase family. Homoserine kinase subfamily.

The protein resides in the cytoplasm. It catalyses the reaction L-homoserine + ATP = O-phospho-L-homoserine + ADP + H(+). Its pathway is amino-acid biosynthesis; L-threonine biosynthesis; L-threonine from L-aspartate: step 4/5. Catalyzes the ATP-dependent phosphorylation of L-homoserine to L-homoserine phosphate. The protein is Homoserine kinase of Yersinia enterocolitica serotype O:8 / biotype 1B (strain NCTC 13174 / 8081).